Consider the following 443-residue polypeptide: Xaa-Pro dipeptidase (443 aa).

Residues aspartate 246, aspartate 257, histidine 339, glutamate 384, and glutamate 423 each coordinate Mn(2+).

Belongs to the peptidase M24B family. Bacterial-type prolidase subfamily. Mn(2+) is required as a cofactor.

The catalysed reaction is Xaa-L-Pro dipeptide + H2O = an L-alpha-amino acid + L-proline. In terms of biological role, splits dipeptides with a prolyl residue in the C-terminal position. This is Xaa-Pro dipeptidase from Pectobacterium carotovorum subsp. carotovorum (strain PC1).